We begin with the raw amino-acid sequence, 639 residues long: MNDRPPTPLLDTVSTPEDLRRLKPADLRQLADELRAEMISAVSVTGGHLGAGLGVVELTVALHYVFDTPRDVLIWDVGHQAYPHKILTGRRDRIRTLRQGGGLSGFTKRSESEYDPFGAAHSSTSISAALGFAVANKLANKEGRAIAVIGDGAMSAGMAYEAMNNAKQAGNRLIVILNDNDMSIAPPVGALSAYLAKIVSSRPFLSMRGFAKRVAQKLPRPIHDFAKRSEEYARGMATGGTLFEELGFYYVGPVDGHNLDHLLPILENVRDGDHGPILIHVVTNKGKGYAPAEAAADKYHGVQKFDVVSGVQAKAPPGPPSYTGVFADALVAEAKRDDRICAITAAMPSGTGLDKFGKAFPERSFDVGIAEQHAVTFAAGLAAQGYRPFCAIYSTFLQRAYDQVVHDVAIQNLPVRFAIDRAGLVGADGSTHAGSFDITYLATLPNMVVMAAADEAELVHMVHTAAVHDSGPIALRYPRGNGVGVALPAAPERLAIGKGRIVREGKTVALLSLGTRLGEALRAADQLDALGLSTTVADLRFAKPLDEAMIQTLLTSHEVAVTIEEGAIGGLGAHVLTLASDLGLIDGGLKLRTMRLPDAFQEHDKPEKQYAEAGLDAESIVATVLAALHRNSKGLEESA.

Residues histidine 79 and 120–122 each bind thiamine diphosphate; that span reads AHS. A Mg(2+)-binding site is contributed by aspartate 151. Thiamine diphosphate-binding positions include 152–153, asparagine 180, tyrosine 289, and glutamate 371; that span reads GA. A Mg(2+)-binding site is contributed by asparagine 180.

It belongs to the transketolase family. DXPS subfamily. In terms of assembly, homodimer. Mg(2+) serves as cofactor. The cofactor is thiamine diphosphate.

The enzyme catalyses D-glyceraldehyde 3-phosphate + pyruvate + H(+) = 1-deoxy-D-xylulose 5-phosphate + CO2. It participates in metabolic intermediate biosynthesis; 1-deoxy-D-xylulose 5-phosphate biosynthesis; 1-deoxy-D-xylulose 5-phosphate from D-glyceraldehyde 3-phosphate and pyruvate: step 1/1. In terms of biological role, catalyzes the acyloin condensation reaction between C atoms 2 and 3 of pyruvate and glyceraldehyde 3-phosphate to yield 1-deoxy-D-xylulose-5-phosphate (DXP). The sequence is that of 1-deoxy-D-xylulose-5-phosphate synthase from Rhizorhabdus wittichii (strain DSM 6014 / CCUG 31198 / JCM 15750 / NBRC 105917 / EY 4224 / RW1) (Sphingomonas wittichii).